Here is a 345-residue protein sequence, read N- to C-terminus: Nicotinate-nucleotide--dimethylbenzimidazole phosphoribosyltransferase (345 aa).

Glu312 acts as the Proton acceptor in catalysis.

Belongs to the CobT family.

It catalyses the reaction 5,6-dimethylbenzimidazole + nicotinate beta-D-ribonucleotide = alpha-ribazole 5'-phosphate + nicotinate + H(+). It functions in the pathway nucleoside biosynthesis; alpha-ribazole biosynthesis; alpha-ribazole from 5,6-dimethylbenzimidazole: step 1/2. Its function is as follows. Catalyzes the synthesis of alpha-ribazole-5'-phosphate from nicotinate mononucleotide (NAMN) and 5,6-dimethylbenzimidazole (DMB). The chain is Nicotinate-nucleotide--dimethylbenzimidazole phosphoribosyltransferase from Phocaeicola vulgatus (strain ATCC 8482 / DSM 1447 / JCM 5826 / CCUG 4940 / NBRC 14291 / NCTC 11154) (Bacteroides vulgatus).